A 494-amino-acid chain; its full sequence is Probable cytosol aminopeptidase (494 aa).

K260 and D265 together coordinate Mn(2+). The active site involves K272. Residues D283, D342, and E344 each coordinate Mn(2+). Residue R346 is part of the active site.

It belongs to the peptidase M17 family. The cofactor is Mn(2+).

The protein resides in the cytoplasm. It carries out the reaction Release of an N-terminal amino acid, Xaa-|-Yaa-, in which Xaa is preferably Leu, but may be other amino acids including Pro although not Arg or Lys, and Yaa may be Pro. Amino acid amides and methyl esters are also readily hydrolyzed, but rates on arylamides are exceedingly low.. It catalyses the reaction Release of an N-terminal amino acid, preferentially leucine, but not glutamic or aspartic acids.. Its function is as follows. Presumably involved in the processing and regular turnover of intracellular proteins. Catalyzes the removal of unsubstituted N-terminal amino acids from various peptides. The sequence is that of Probable cytosol aminopeptidase from Bacillus cereus (strain ATCC 14579 / DSM 31 / CCUG 7414 / JCM 2152 / NBRC 15305 / NCIMB 9373 / NCTC 2599 / NRRL B-3711).